The primary structure comprises 329 residues: UPF0725 protein EMB2204 (329 aa).

The protein belongs to the UPF0725 (EMB2204) family.

May be involved in embryogenesis. The sequence is that of UPF0725 protein EMB2204 (EMB2204) from Arabidopsis thaliana (Mouse-ear cress).